Consider the following 410-residue polypeptide: Cytochrome P450 (410 aa).

C359 contributes to the heme binding site.

Belongs to the cytochrome P450 family. Heme is required as a cofactor.

The protein is Cytochrome P450 (cypA) of Bacillus subtilis (strain 168).